Here is a 137-residue protein sequence, read N- to C-terminus: Large ribosomal subunit protein uL16 (137 aa).

The protein belongs to the universal ribosomal protein uL16 family. Part of the 50S ribosomal subunit.

Binds 23S rRNA and is also seen to make contacts with the A and possibly P site tRNAs. In Endomicrobium trichonymphae, this protein is Large ribosomal subunit protein uL16.